The sequence spans 144 residues: Large ribosomal subunit protein uL15 (144 aa).

The tract at residues 1–58 (MRLNTLAPAAGSKHAPKRVGRGIGSGLGKTGGRGHKGQKSRSGGKVRPGFEGGQMPLK) is disordered. A compositionally biased stretch (gly residues) spans 21–31 (RGIGSGLGKTG). Residues 32 to 44 (GRGHKGQKSRSGG) show a composition bias toward basic residues.

This sequence belongs to the universal ribosomal protein uL15 family. In terms of assembly, part of the 50S ribosomal subunit.

Binds to the 23S rRNA. This is Large ribosomal subunit protein uL15 from Vibrio parahaemolyticus serotype O3:K6 (strain RIMD 2210633).